A 538-amino-acid polypeptide reads, in one-letter code: Cryptic outer membrane porin BglH (538 aa).

The signal sequence occupies residues Met1–Ala25. Residues Lys52–Thr82 are disordered. A compositionally biased stretch (polar residues) spans Ala62–Gln73.

This sequence belongs to the porin LamB (TC 1.B.3) family. As to quaternary structure, homomonomer; no physical evidence of a homotrimer has been found, however conductance experiments suggest it may be a homotrimer. The monomer probably consists of 18 antiparallel beta-strands.

It localises to the cell outer membrane. Part of a cryptic operon that is poorly expressed in vivo. May be an ancestral sugar porin with a broad carbohydrate specificity; it binds aromatic beta-D-glucosides such as arbutin and salicin, but with low affinity compared to the binding of maltooligosaccharides to the LamB porin. The polypeptide is Cryptic outer membrane porin BglH (bglH) (Escherichia coli (strain K12)).